We begin with the raw amino-acid sequence, 186 residues long: Nucleoside diphosphate kinase, mitochondrial (186 aa).

The transit peptide at 1-32 directs the protein to the mitochondrion; sequence MGSLFGRVAALRALLCGPRFQCLLVRPSSGGP. Lysine 44, phenylalanine 92, arginine 120, threonine 126, arginine 137, and asparagine 147 together coordinate ATP. Histidine 150 serves as the catalytic Pros-phosphohistidine intermediate.

This sequence belongs to the NDK family. As to quaternary structure, homohexamer. Interacts with OPA1. Interacts with CAPN8. It depends on Mg(2+) as a cofactor. In terms of tissue distribution, expressed in the base region of the oxyntic and pyloric mucosae.

The protein localises to the mitochondrion intermembrane space. Its subcellular location is the mitochondrion matrix. It catalyses the reaction a 2'-deoxyribonucleoside 5'-diphosphate + ATP = a 2'-deoxyribonucleoside 5'-triphosphate + ADP. The catalysed reaction is a ribonucleoside 5'-diphosphate + ATP = a ribonucleoside 5'-triphosphate + ADP. Its function is as follows. Major role in the synthesis of nucleoside triphosphates other than ATP. The ATP gamma phosphate is transferred to the NDP beta phosphate via a ping-pong mechanism, using a phosphorylated active-site intermediate. Through the catalyzed exchange of gamma-phosphate between di- and triphosphonucleosides participates in regulation of intracellular nucleotide homeostasis. Binds to anionic phospholipids, predominantly to cardiolipin; the binding inhibits its phosphotransfer activity. Acts as a mitochondria-specific NDK; its association with cardiolipin-containing mitochondrial inner membrane is coupled to respiration suggesting that ADP locally regenerated in the mitochondrion innermembrane space by its activity is directly taken up via ANT ADP/ATP translocase into the matrix space to stimulate respiratory ATP regeneration. Proposed to increase GTP-loading on dynamin-related GTPase OPA1 in mitochondria. In vitro can induce liposome cross-linking suggesting that it can cross-link inner and outer membranes to form contact sites, and promotes intermembrane migration of anionic phosphoplipids. Promotes the redistribution of cardiolipin between the mitochondrial inner membrane and outer membrane which is implicated in pro-apoptotic signaling. In Mus musculus (Mouse), this protein is Nucleoside diphosphate kinase, mitochondrial (Nme4).